A 571-amino-acid chain; its full sequence is Methionine--tRNA ligase (571 aa).

The short motif at Pro-10–Asn-20 is the 'HIGH' region element. Residues Cys-143, Cys-146, Cys-156, and Cys-159 each contribute to the Zn(2+) site. The 'KMSKS' region motif lies at Lys-333 to Ser-337. Position 336 (Lys-336) interacts with ATP.

Belongs to the class-I aminoacyl-tRNA synthetase family. MetG type 1 subfamily. Zn(2+) serves as cofactor.

It is found in the cytoplasm. It catalyses the reaction tRNA(Met) + L-methionine + ATP = L-methionyl-tRNA(Met) + AMP + diphosphate. Is required not only for elongation of protein synthesis but also for the initiation of all mRNA translation through initiator tRNA(fMet) aminoacylation. The polypeptide is Methionine--tRNA ligase (Sulfolobus acidocaldarius (strain ATCC 33909 / DSM 639 / JCM 8929 / NBRC 15157 / NCIMB 11770)).